The sequence spans 424 residues: Endoglucanase (424 aa).

The first 19 residues, Met-1–Gly-19, serve as a signal peptide directing secretion. Cys-20 carries N-palmitoyl cysteine lipidation. A lipid anchor (S-diacylglycerol cysteine) is attached at Cys-20. A propeptide spanning residues Cys-20–Ala-43 is cleaved from the precursor. Glu-247 serves as the catalytic Proton donor. Glu-359 acts as the Nucleophile in catalysis.

The protein belongs to the glycosyl hydrolase 5 (cellulase A) family.

The protein localises to the cell membrane. It carries out the reaction Endohydrolysis of (1-&gt;4)-beta-D-glucosidic linkages in cellulose, lichenin and cereal beta-D-glucans.. The protein is Endoglucanase (egl) of Ralstonia nicotianae (strain ATCC BAA-1114 / GMI1000) (Ralstonia solanacearum).